A 270-amino-acid chain; its full sequence is Putative phosphoenolpyruvate synthase regulatory protein (270 aa).

150–157 (GVSRCGKT) contacts ADP.

This sequence belongs to the pyruvate, phosphate/water dikinase regulatory protein family. PSRP subfamily.

The catalysed reaction is [pyruvate, water dikinase] + ADP = [pyruvate, water dikinase]-phosphate + AMP + H(+). It catalyses the reaction [pyruvate, water dikinase]-phosphate + phosphate + H(+) = [pyruvate, water dikinase] + diphosphate. Its function is as follows. Bifunctional serine/threonine kinase and phosphorylase involved in the regulation of the phosphoenolpyruvate synthase (PEPS) by catalyzing its phosphorylation/dephosphorylation. The sequence is that of Putative phosphoenolpyruvate synthase regulatory protein from Shewanella baltica (strain OS223).